The following is a 275-amino-acid chain: HUWE1-associated protein modifying stress responses (275 aa).

A compositionally biased stretch (acidic residues) spans 32–44 (AEQDEQLSPELQE). 4 disordered regions span residues 32 to 51 (AEQD…AAAQ), 155 to 181 (RNSR…SSVE), 204 to 228 (SVRS…RRNG), and 250 to 275 (GTRK…NRML). A Phosphoserine modification is found at S167. Positions 172 to 181 (TSTETSSSVE) are enriched in low complexity. Residues 204 to 221 (SVRSSTPGSPTHVSSGPN) show a composition bias toward polar residues. A Phosphoserine modification is found at S212.

It belongs to the HAPSTR1 family. Homooligomer. Heterooligomer with HAPSTR2; the interaction is direct and stabilizes HAPSTR1. Interacts with HUWE1. In terms of processing, ubiquitinated by HUWE1. Promotes HAPSTR1 degradation through polyubiquitination.

It is found in the nucleus. The protein localises to the cytoplasm. In terms of biological role, acts as a central player within a network of stress response pathways promoting cellular adaptability. The E3 ligase HUWE1 assists HAPSTR1 in controlling stress signaling and in turn, HUWE1 feeds back to promote the degradation of HAPSTR1. HAPSTR1 represents a central coordination mechanism for stress response programs. Functions as a negative regulator of TP53/P53 in the cellular response to telomere erosion and probably also DNA damage. May attenuate p53/TP53 activation through the E3 ubiquitin ligase HUWE1. This is HUWE1-associated protein modifying stress responses from Mus musculus (Mouse).